The following is a 117-amino-acid chain: DNA-directed RNA polymerase II subunit RPB11 (117 aa).

Methionine 1 is subject to N-acetylmethionine.

The protein belongs to the archaeal Rpo11/eukaryotic RPB11/RPC19 RNA polymerase subunit family. Component of the RNA polymerase II (Pol II) core complex consisting of 12 subunits: a ten-subunit catalytic core composed of POLR2A/RPB1, POLR2B/RPB2, POLR2C/RPB3, POLR2I/RPB9, POLR2J/RPB11, POLR2E/RPABC1, POLR2F/RPABC2, POLR2H/RPABC3, POLR2K/RPABC4 and POLR2L/RPABC5 and a mobile stalk composed of two subunits POLR2D/RPB4 and POLR2G/RPB7, protruding from the core and functioning primarily in transcription initiation. Part of Pol II(G) complex, in which Pol II core associates with an additional subunit POLR2M; unlike conventional Pol II, Pol II(G) functions as a transcriptional repressor. Part of TBP-based Pol II pre-initiation complex (PIC), in which Pol II core assembles with general transcription factors and other specific initiation factors including GTF2E1, GTF2E2, GTF2F1, GTF2F2, TCEA1, ERCC2, ERCC3, GTF2H2, GTF2H3, GTF2H4, GTF2H5, GTF2A1, GTF2A2, GTF2B and TBP; this large multi-subunit PIC complex mediates DNA unwinding and targets Pol II core to the transcription start site where the first phosphodiester bond forms. Interacts with AATF. Interacts with PTPN6; this interaction promotes the recruitment of RNA pol II to the PCK1 promoter.

It is found in the nucleus. Functionally, core component of RNA polymerase II (Pol II), a DNA-dependent RNA polymerase which synthesizes mRNA precursors and many functional non-coding RNAs using the four ribonucleoside triphosphates as substrates. This Mus musculus (Mouse) protein is DNA-directed RNA polymerase II subunit RPB11 (Polr2j).